The following is a 699-amino-acid chain: MAREYKIEDYRNFGIMAHIDAGKTTTTERILYYTGKSHKIGEVHDGAATMDWMEQEQERGITITSAATTTYWKGRDGKMRRFNIIDTPGHVDFTIEVERSLRVLDGAIALLDANAGVEPQTETVWRQAEKYNVPRMIFCNKMDKTGADFYRSVEMIKTRLGATAVVMQLPIGAETEFKGVVDLIEMNALVWRDESLGAAWDVTEIPDDLKEKAVEYREKLIETVVEIDEQAMEDYLNGIMPDNDKIRALVRQGTIEVKFHPMFCGTAFKNKGVQPLLDAVCEYLPSPLDIPAIKGIDVKTDGEIERHPDDAEPLSMLAFKIMNDPFVGSLTFCRIYSGKLEKGASVMNTVKEKRERVGRMLQMHSNSREDIEEAFAGDIVALAGLKESTTGDTLCDPLNQVILERMEFPEPVIQIAIEPKTKGDQEKMGLALNRLAAEDPSFRVKTDQESGQTIIAGMGELHLDIIVDRMRREFKVEATVGAPQVAYRETITRQHEEDYTHKKQSGGTGQFARVKIIFEPNPEGDEFKFDSKIVGGSVPKEYIPGVQKGIESVLSSGPLAGFPMLGVKATLIDGAYHDVDSSVLAFEIASRACFREAAKKAGAQLLEPMMKVEVVTPEDYVGDVIGDLNSRRGQIQGQESRGIAVVINAHVPLANMFKYVDNLRSMSQGRAQYSMVFDHYSPVPSNVAAEIQAKYSGQK.

The region spanning 8 to 288 (EDYRNFGIMA…AVCEYLPSPL (281 aa)) is the tr-type G domain. GTP is bound by residues 17 to 24 (AHIDAGKT), 86 to 90 (DTPGH), and 140 to 143 (NKMD).

It belongs to the TRAFAC class translation factor GTPase superfamily. Classic translation factor GTPase family. EF-G/EF-2 subfamily.

It is found in the cytoplasm. Functionally, catalyzes the GTP-dependent ribosomal translocation step during translation elongation. During this step, the ribosome changes from the pre-translocational (PRE) to the post-translocational (POST) state as the newly formed A-site-bound peptidyl-tRNA and P-site-bound deacylated tRNA move to the P and E sites, respectively. Catalyzes the coordinated movement of the two tRNA molecules, the mRNA and conformational changes in the ribosome. The polypeptide is Elongation factor G (Allorhizobium ampelinum (strain ATCC BAA-846 / DSM 112012 / S4) (Agrobacterium vitis (strain S4))).